The primary structure comprises 447 residues: Tektin-4 (447 aa).

Coiled coils occupy residues 114-143, 324-348, and 375-423; these read KSEL…RALD, KILS…DKEA, and FRLM…TNSL.

Belongs to the tektin family. In terms of assembly, microtubule inner protein component of sperm flagellar doublet microtubules. In terms of processing, ubiquitinated, leading to its degradation. Deubiquitinated by USP16, promoting its stability.

The protein resides in the cytoplasm. It localises to the cytoskeleton. The protein localises to the cilium axoneme. Its subcellular location is the flagellum axoneme. Functionally, microtubule inner protein (MIP) part of the dynein-decorated doublet microtubules (DMTs) in cilia and flagellar axoneme. Forms filamentous polymers in the walls of ciliary and flagellar microtubules. Contributes to normal sperm motility. This chain is Tektin-4 (Tekt4), found in Rattus norvegicus (Rat).